The primary structure comprises 882 residues: Cadherin-1 (882 aa).

A signal peptide spans 1–23 (MGPWSRSLSALCCCCRCNPWLCR). Positions 24-154 (EPEPCIPGFG…PHHGLRRQKR (131 aa)) are excised as a propeptide. Positions 117–137 (EVSAHHHHHHSHHDSPSGTQT) are disordered. Cadherin domains lie at 154-262 (RDWV…KPQF), 263-375 (TQEV…APRF), 376-486 (NPTT…APIF), 487-595 (VPPQ…GPVP), and 594-702 (VPEP…RPAE). The Extracellular portion of the chain corresponds to 155 to 709 (DWVIPPISCP…PAEAGLQVPA (555 aa)). O-linked (Man...) serine glycosylation is present at S280. O-linked (Man...) threonine glycans are attached at residues T285, T358, T470, T472, and T509. An N-linked (GlcNAc...) asparagine glycan is attached at N558. T576, T578, and T580 each carry an O-linked (Man...) threonine glycan. N-linked (GlcNAc...) asparagine glycosylation is present at N637. The helical transmembrane segment at 710–730 (ILGILGGILAFLILILLLLLL) threads the bilayer. The Cytoplasmic portion of the chain corresponds to 731–882 (VRRRRVVKEP…ADMYGGGEDD (152 aa)). Residues 747–767 (DTRDNVYYYDEEGGGEEDQDF) form a disordered region. 3 positions are modified to phosphotyrosine; by SRC: Y753, Y754, and Y755. A compositionally biased stretch (acidic residues) spans 755–767 (YDEEGGGEEDQDF). A required for binding CTNND1 and PSEN1 region spans residues 758–769 (EGGGEEDQDFDL). 5 positions are modified to phosphoserine: S770, S793, S838, S840, and S846. The segment at 811 to 882 (IDENLKAADS…ADMYGGGEDD (72 aa)) is required for binding alpha, beta and gamma catenins.

As to quaternary structure, homodimer; disulfide-linked. Component of an E-cadherin/ catenin adhesion complex composed of at least E-cadherin/CDH1, beta-catenin/CTNNB1 or gamma-catenin/JUP, and potentially alpha-catenin/CTNNA1; the complex is located to adherens junctions. Found in a complex composed of CDH1, RAP1A and PKP3; PKP3 acts as a scaffold protein within the complex, the complex is required for CDH1 localization to mature desmosome cell junctions. Interacts with the TRPV4 and CTNNB1 complex. Interacts with CTNND1. The stable association of CTNNA1 is controversial as CTNNA1 was shown not to bind to F-actin when assembled in the complex. Alternatively, the CTNNA1-containing complex may be linked to F-actin by other proteins such as LIMA1. Interaction with PSEN1, cleaves CDH1 resulting in the disassociation of cadherin-based adherens junctions (CAJs). Interacts with AJAP1 and DLGAP5. Interacts with TBC1D2. Interacts with CAV1. Interacts with PIP5K1C. Interacts with RAB8B. Interacts with DDR1; this stabilizes CDH1 at the cell surface and inhibits its internalization. Interacts with RAPGEF2. Interacts with KLRG1. Forms a ternary complex composed of ADAM10, CADH1 and EPHA4; within the complex, CADH1 is cleaved by ADAM10 which disrupts adherens junctions. Interacts with SPEF1. Interacts with CTNNB1 and PKP2. Interacts with AMOTL2; the interaction may facilitate binding of radial actin fibers to cell junction complexes. Interacts with DSG3; the interaction is required for CDH1 localization to developing adherens junctions. Post-translationally, during apoptosis or with calcium influx, cleaved by a membrane-bound metalloproteinase (ADAM10), PS1/gamma-secretase and caspase-3. Processing by the metalloproteinase, induced by calcium influx, causes disruption of cell-cell adhesion and the subsequent release of beta-catenin into the cytoplasm. The residual membrane-tethered cleavage product is rapidly degraded via an intracellular proteolytic pathway. Cleavage by caspase-3 releases the cytoplasmic tail resulting in disintegration of the actin microfilament system. The gamma-secretase-mediated cleavage promotes disassembly of adherens junctions. During development of the cochlear organ of Corti, cleavage by ADAM10 at adherens junctions promotes pillar cell separation. N-glycosylation at Asn-637 is essential for expression, folding and trafficking. Addition of bisecting N-acetylglucosamine by MGAT3 modulates its cell membrane location. In terms of processing, ubiquitinated by a SCF complex containing SKP2, which requires prior phosphorylation by CK1/CSNK1A1. Ubiquitinated by CBLL1/HAKAI, requires prior phosphorylation at Tyr-754. Post-translationally, O-glycosylated. O-manosylated by TMTC1, TMTC2, TMTC3 or TMTC4. Thr-285 and Thr-509 are O-mannosylated by TMTC2 or TMTC4 but not TMTC1 or TMTC3.

The protein localises to the cell junction. The protein resides in the adherens junction. It localises to the cell membrane. It is found in the endosome. Its subcellular location is the golgi apparatus. The protein localises to the trans-Golgi network. The protein resides in the cytoplasm. It localises to the desmosome. Cadherins are calcium-dependent cell adhesion proteins. They preferentially interact with themselves in a homophilic manner in connecting cells; cadherins may thus contribute to the sorting of heterogeneous cell types. CDH1 is involved in mechanisms regulating cell-cell adhesions, mobility and proliferation of epithelial cells. Promotes organization of radial actin fiber structure and cellular response to contractile forces, via its interaction with AMOTL2 which facilitates anchoring of radial actin fibers to CDH1 junction complexes at the cell membrane. Plays a role in the early stages of desmosome cell-cell junction formation via facilitating the recruitment of DSG2 and DSP to desmosome plaques. Has a potent invasive suppressor role. It is a ligand for integrin alpha-E/beta-7. Its function is as follows. E-Cad/CTF2 promotes non-amyloidogenic degradation of Abeta precursors. Has a strong inhibitory effect on APP C99 and C83 production. This Bos taurus (Bovine) protein is Cadherin-1 (CDH1).